The chain runs to 468 residues: Glutamate--tRNA ligase (468 aa).

The 'HIGH' region signature appears at 11 to 21; it reads PSPTGFIHLGN. A 'KMSKS' region motif is present at residues 243-247; it reads KMSKR. Lys246 provides a ligand contact to ATP.

Belongs to the class-I aminoacyl-tRNA synthetase family. Glutamate--tRNA ligase type 1 subfamily. In terms of assembly, monomer.

It is found in the cytoplasm. The enzyme catalyses tRNA(Glu) + L-glutamate + ATP = L-glutamyl-tRNA(Glu) + AMP + diphosphate. Its function is as follows. Catalyzes the attachment of glutamate to tRNA(Glu) in a two-step reaction: glutamate is first activated by ATP to form Glu-AMP and then transferred to the acceptor end of tRNA(Glu). The chain is Glutamate--tRNA ligase from Cupriavidus pinatubonensis (strain JMP 134 / LMG 1197) (Cupriavidus necator (strain JMP 134)).